The chain runs to 118 residues: Large ribosomal subunit protein uL18 (118 aa).

This sequence belongs to the universal ribosomal protein uL18 family. In terms of assembly, part of the 50S ribosomal subunit; part of the 5S rRNA/L5/L18/L25 subcomplex. Contacts the 5S and 23S rRNAs.

Functionally, this is one of the proteins that bind and probably mediate the attachment of the 5S RNA into the large ribosomal subunit, where it forms part of the central protuberance. The sequence is that of Large ribosomal subunit protein uL18 from Nitratiruptor sp. (strain SB155-2).